The following is a 307-amino-acid chain: Nucleotide-binding protein AAur_2084 (307 aa).

A disordered region spans residues 1–21 (MDEATAKSGTEQDGLTPVKPP). 30-37 (GMSGAGRS) is an ATP binding site. 81-84 (DVRS) is a binding site for GTP.

It belongs to the RapZ-like family.

Its function is as follows. Displays ATPase and GTPase activities. The chain is Nucleotide-binding protein AAur_2084 from Paenarthrobacter aurescens (strain TC1).